The chain runs to 537 residues: Extracellular exo-inulinase inuE (537 aa).

The N-terminal stretch at 1–19 (MARLLKAVTVCALAGIAHA) is a signal peptide. Aspartate 41 is an active-site residue. N-linked (GlcNAc...) asparagine glycosylation is found at asparagine 49, asparagine 67, asparagine 112, asparagine 300, asparagine 363, asparagine 398, asparagine 430, and asparagine 531.

It belongs to the glycosyl hydrolase 32 family.

The protein localises to the secreted. It catalyses the reaction Hydrolysis of terminal, non-reducing (2-&gt;1)- and (2-&gt;6)-linked beta-D-fructofuranose residues in fructans.. With respect to regulation, the catalytic activity is increased by manganese cathions, but strongly inhibited by other metal ions such as copper, aluminum, silver, iron, nickel, zinc and magnesium cathions. In terms of biological role, exo-inulinase involved in utilization of the plant storage polymer inulin, consisting of fructooligosaccharides with a degree of polymerization (DP) value from 2 to 60. Splits off terminal fructose units successively from the non-reducing end of the inulin molecule, and also hydrolyze sucrose and raffinose. This Aspergillus ficuum protein is Extracellular exo-inulinase inuE (exoI).